The chain runs to 118 residues: Small ribosomal subunit protein uS13 (118 aa).

Residues 94–118 (GLPVRGQRTKTNARTRKGPRKPIKK) are disordered.

The protein belongs to the universal ribosomal protein uS13 family. Part of the 30S ribosomal subunit. Forms a loose heterodimer with protein S19. Forms two bridges to the 50S subunit in the 70S ribosome.

Located at the top of the head of the 30S subunit, it contacts several helices of the 16S rRNA. In the 70S ribosome it contacts the 23S rRNA (bridge B1a) and protein L5 of the 50S subunit (bridge B1b), connecting the 2 subunits; these bridges are implicated in subunit movement. Contacts the tRNAs in the A and P-sites. The protein is Small ribosomal subunit protein uS13 of Mannheimia succiniciproducens (strain KCTC 0769BP / MBEL55E).